We begin with the raw amino-acid sequence, 154 residues long: 6,7-dimethyl-8-ribityllumazine synthase (154 aa).

5-amino-6-(D-ribitylamino)uracil is bound by residues Phe-22, 56–58 (AFE), and 80–82 (AVI). 85-86 (AT) contacts (2S)-2-hydroxy-3-oxobutyl phosphate. The Proton donor role is filled by His-88. Residue Phe-113 coordinates 5-amino-6-(D-ribitylamino)uracil. Arg-127 serves as a coordination point for (2S)-2-hydroxy-3-oxobutyl phosphate.

Belongs to the DMRL synthase family.

It catalyses the reaction (2S)-2-hydroxy-3-oxobutyl phosphate + 5-amino-6-(D-ribitylamino)uracil = 6,7-dimethyl-8-(1-D-ribityl)lumazine + phosphate + 2 H2O + H(+). Its pathway is cofactor biosynthesis; riboflavin biosynthesis; riboflavin from 2-hydroxy-3-oxobutyl phosphate and 5-amino-6-(D-ribitylamino)uracil: step 1/2. Catalyzes the formation of 6,7-dimethyl-8-ribityllumazine by condensation of 5-amino-6-(D-ribitylamino)uracil with 3,4-dihydroxy-2-butanone 4-phosphate. This is the penultimate step in the biosynthesis of riboflavin. In Clostridium botulinum (strain 657 / Type Ba4), this protein is 6,7-dimethyl-8-ribityllumazine synthase.